We begin with the raw amino-acid sequence, 214 residues long: MEAYKSEFIQFALSRQVLKFGEFTLKSGRISPYFFNAGLFNTGADLARLGEFYAKAIQASGVEYDVIFGPAYKGLPIATTVSVALFNHFQIDKPVCFNRKEAKDHGEGGQLIGYGLSGKILLVDDVITAGTAIRESMTLIAQNQAELSAVMIALNRQEKGKGELSAIQEVERDYQCQVLSIVNFDDLMTFIEQAPEYQQYLPAMRAYREQYGVK.

Residue Lys26 participates in 5-phospho-alpha-D-ribose 1-diphosphate binding. Phe34–Phe35 contacts orotate. Residues Tyr72 to Lys73, Arg99, Lys100, Lys103, His105, and Asp124 to Ala132 contribute to the 5-phospho-alpha-D-ribose 1-diphosphate site. 2 residues coordinate orotate: Thr128 and Arg156.

The protein belongs to the purine/pyrimidine phosphoribosyltransferase family. PyrE subfamily. In terms of assembly, homodimer. It depends on Mg(2+) as a cofactor.

The catalysed reaction is orotidine 5'-phosphate + diphosphate = orotate + 5-phospho-alpha-D-ribose 1-diphosphate. It participates in pyrimidine metabolism; UMP biosynthesis via de novo pathway; UMP from orotate: step 1/2. Functionally, catalyzes the transfer of a ribosyl phosphate group from 5-phosphoribose 1-diphosphate to orotate, leading to the formation of orotidine monophosphate (OMP). In Pasteurella multocida (strain Pm70), this protein is Orotate phosphoribosyltransferase.